The chain runs to 60 residues: Large ribosomal subunit protein bL32 (60 aa).

The span at Met1–His23 shows a compositional bias: basic residues. A disordered region spans residues Met1–Pro28.

Belongs to the bacterial ribosomal protein bL32 family. As to quaternary structure, part of the 50S ribosomal subunit.

In terms of biological role, found on the solvent side of the large subunit. The sequence is that of Large ribosomal subunit protein bL32 (rpmF) from Thermus thermophilus (strain ATCC BAA-163 / DSM 7039 / HB27).